Reading from the N-terminus, the 462-residue chain is Myb-like transcriptional regulator mfmK (462 aa).

3 HTH myb-type domains span residues 1-54 (MARL…WWNS), 56-110 (ADGT…DPGI), and 113-162 (CDWT…LKHE). DNA-binding regions (H-T-H motif) lie at residues 32 to 52 (WRDL…RRWW), 83 to 106 (WSRV…SQVL), and 134 to 158 (WATI…STLR). The segment covering 159–175 (LKHENESKRESTIRKSV) has biased composition (basic and acidic residues). Disordered regions lie at residues 159 to 184 (LKHE…NFEP), 216 to 262 (DEEE…VDNG), and 374 to 408 (STTT…RTSI). Residues 216 to 235 (DEEEDDDDDDEDNEEDDGDD) are compositionally biased toward acidic residues. Composition is skewed to polar residues over residues 374 to 385 (STTTGMDSSSAP) and 396 to 408 (FGTS…RTSI).

The protein resides in the nucleus. Myb-like transcriptional regulator; part of the gene cluster that mediates the biosynthesis of the phthalide-terpenoid hybrid 11'-O-desmethylfendlerol. The chain is Myb-like transcriptional regulator mfmK from Annulohypoxylon moriforme (Filamentous fungus).